The sequence spans 572 residues: Urease subunit alpha (572 aa).

A Urease domain is found at 136-572 (GGIDTHIHWI…VPLAQRYFLF (437 aa)). Positions 141, 143, and 224 each coordinate Ni(2+). An N6-carboxylysine modification is found at Lys-224. His-226 contributes to the substrate binding site. Ni(2+) contacts are provided by His-253 and His-279. His-327 (proton donor) is an active-site residue. Asp-367 is a Ni(2+) binding site.

It belongs to the metallo-dependent hydrolases superfamily. Urease alpha subunit family. In terms of assembly, heterotrimer of UreA (gamma), UreB (beta) and UreC (alpha) subunits. Three heterotrimers associate to form the active enzyme. Ni cation serves as cofactor. Carboxylation allows a single lysine to coordinate two nickel ions.

It is found in the cytoplasm. It carries out the reaction urea + 2 H2O + H(+) = hydrogencarbonate + 2 NH4(+). The protein operates within nitrogen metabolism; urea degradation; CO(2) and NH(3) from urea (urease route): step 1/1. This is Urease subunit alpha from Actinobacillus pleuropneumoniae serotype 3 (strain JL03).